We begin with the raw amino-acid sequence, 48 residues long: Cytochrome b559 subunit beta (48 aa).

Residues 23–39 (WLAVHALAIPSVFFLGS) form a helical membrane-spanning segment. His27 provides a ligand contact to heme.

It belongs to the PsbE/PsbF family. Heterodimer of an alpha subunit and a beta subunit. PSII is composed of 1 copy each of membrane proteins PsbA, PsbB, PsbC, PsbD, PsbE, PsbF, PsbH, PsbI, PsbJ, PsbK, PsbL, PsbM, PsbT, PsbX, PsbY, Psb30/Ycf12, peripheral proteins PsbO, CyanoQ (PsbQ), PsbU, PsbV and a large number of cofactors. It forms dimeric complexes. Heme b serves as cofactor.

It is found in the cellular thylakoid membrane. In terms of biological role, this b-type cytochrome is tightly associated with the reaction center of photosystem II (PSII). PSII is a light-driven water:plastoquinone oxidoreductase that uses light energy to abstract electrons from H(2)O, generating O(2) and a proton gradient subsequently used for ATP formation. It consists of a core antenna complex that captures photons, and an electron transfer chain that converts photonic excitation into a charge separation. The chain is Cytochrome b559 subunit beta from Prochlorococcus marinus (strain MIT 9301).